A 193-amino-acid chain; its full sequence is MRLILLGPPGAGKGTQSERLREQCKIPQLSTGDMLRAAVKAGTPIGLKAKAVMDAGGLVSDDIVVGIVADRIEEPDARNGFILDGFPRTVKQAEALTTMLHEKKMDLDAVIELVVDENALLARIEKRAKETLAAGGTVRADDNPAAFKTRIDTYREQTAPVSAYYASQGVLKTVDGMADIDTVTAAIDKILKA.

10 to 15 (GAGKGT) is an ATP binding site. The segment at 30 to 59 (STGDMLRAAVKAGTPIGLKAKAVMDAGGLV) is NMP. AMP contacts are provided by residues T31, R36, 57 to 59 (GLV), 85 to 88 (GFPR), and Q92. Residues 126-142 (KRAKETLAAGGTVRADD) form an LID region. R127 contacts ATP. Positions 139 and 150 each coordinate AMP. Position 178 (A178) interacts with ATP.

This sequence belongs to the adenylate kinase family. Monomer.

The protein localises to the cytoplasm. It catalyses the reaction AMP + ATP = 2 ADP. The protein operates within purine metabolism; AMP biosynthesis via salvage pathway; AMP from ADP: step 1/1. Its function is as follows. Catalyzes the reversible transfer of the terminal phosphate group between ATP and AMP. Plays an important role in cellular energy homeostasis and in adenine nucleotide metabolism. This Beijerinckia indica subsp. indica (strain ATCC 9039 / DSM 1715 / NCIMB 8712) protein is Adenylate kinase.